Here is a 421-residue protein sequence, read N- to C-terminus: Testin (421 aa).

The PET domain occupies 92–199; that stretch reads MILTNPVAAK…GDVKLPCEMD (108 aa). Positions 133–164 are disordered; it reads EKQPVAGSEGAQYRKKQLAKQLPAHDQDPSKC. A compositionally biased stretch (basic and acidic residues) spans 155 to 164; sequence PAHDQDPSKC. LIM zinc-binding domains lie at 234 to 297, 299 to 359, and 362 to 421; these read YSCY…CDSE, PRCA…NHAV, and QGCH…KMMS.

It belongs to the prickle / espinas / testin family. As to quaternary structure, interacts via LIM domain 1 with ZYX. Interacts (via LIM domain 3) with ENAH and VASP. Interacts with ALKBH4, talin, actin, alpha-actinin, GRIP1 and PXN. Interacts (via LIM domain 2) with ACTL7A (via N-terminus). Heterodimer with ACTL7A; the heterodimer interacts with ENAH to form a heterotrimer.

The protein localises to the cytoplasm. Its subcellular location is the cell junction. It is found in the focal adhesion. Functionally, scaffold protein that may play a role in cell adhesion, cell spreading and in the reorganization of the actin cytoskeleton. Plays a role in the regulation of cell proliferation. May act as a tumor suppressor. This chain is Testin (TES), found in Saimiri boliviensis boliviensis (Bolivian squirrel monkey).